The sequence spans 359 residues: Acyl-CoA desaturase (359 aa).

The Cytoplasmic segment spans residues 1–72 (MPAHLLQEEI…EGPKPKLEYV (72 aa)). Residues 73-93 (WRNIILMGLLHLGALYGITLI) form a helical membrane-spanning segment. Asn75 is a substrate binding site. At 94–97 (PTCK) the chain is on the lumenal side. Residues 98–118 (IYTFLWVLFYYVISALGITAG) traverse the membrane as a helical segment. At 119–217 (VHRLWSHRTY…EKLVMFQRRY (99 aa)) the chain is on the cytoplasmic side. The Fe cation site is built by His120 and His125. Positions 120–125 (HRLWSH) match the Histidine box-1 motif. Asn148, Arg155, and Asp156 together coordinate substrate. Residues His157, His160, and His161 each contribute to the Fe cation site. The Histidine box-2 motif lies at 157–161 (HRAHH). The substrate site is built by Arg188 and Lys189. Ser203 is modified (phosphoserine). Residues 218–237 (YKPGVLLLCFILPTLVPWYL) traverse the membrane as a helical segment. Over 238-241 (WGES) the chain is Lumenal. A helical membrane pass occupies residues 242–263 (FQNSLFFATFLRYAVVLNATWL). Trp262 provides a ligand contact to substrate. Residues 264–359 (VNSAAHMYGY…RTGEESYKSG (96 aa)) are Cytoplasmic-facing. Residues His269, His298, His301, and His302 each contribute to the Fe cation site. A Histidine box-3 motif is present at residues 298–302 (HNYHH).

The protein belongs to the fatty acid desaturase type 1 family. The cofactor is Fe(2+).

It localises to the endoplasmic reticulum membrane. It catalyses the reaction octadecanoyl-CoA + 2 Fe(II)-[cytochrome b5] + O2 + 2 H(+) = (9Z)-octadecenoyl-CoA + 2 Fe(III)-[cytochrome b5] + 2 H2O. In terms of biological role, stearoyl-CoA desaturase that utilizes O(2) and electrons from reduced cytochrome b5 to introduce the first double bond into saturated fatty acyl-CoA substrates. Catalyzes the insertion of a cis double bond at the delta-9 position into fatty acyl-CoA substrates including palmitoyl-CoA and stearoyl-CoA. Gives rise to a mixture of 16:1 and 18:1 unsaturated fatty acids. Plays an important role in lipid biosynthesis. Plays an important role in regulating the expression of genes that are involved in lipogenesis and in regulating mitochondrial fatty acid oxidation. Plays an important role in body energy homeostasis. Contributes to the biosynthesis of membrane phospholipids, cholesterol esters and triglycerides. In Ovis aries (Sheep), this protein is Acyl-CoA desaturase (SCD).